The following is a 350-amino-acid chain: MTLRKIIHIDMDAFYASVEMRDDPSLVLKPIAVGGDPDKRGVIATANYLARKFGVRSAMPSWKAKQLCPDLIILFPDFDKYKRESKAIHEIFHLFTDLIEPLSLDEAFLDVTDVDALRGSATWIAQEIRQLIWKERGLTASAGVAPNKFLAKVASDWHKPNGQFVLTPKEVDAFMVHLPVEKIFGIGHVMAKKLHSLGLMNCGDLQTLDITTLQKLFGSRAWNLYELCRGIDHRFVISDRIRKSLSVESTFLEDLNNLELCYQEIPNLIERLMIRYEKISNQYYKKKPFIKIKFADFTTTTVENTFFKAFDLETYQTLIRIGWERKKAPVRLLGLGMSLSLEEEIQLTLF.

A UmuC domain is found at 6–187; that stretch reads IIHIDMDAFY…LPVEKIFGIG (182 aa). Mg(2+) is bound by residues Asp10 and Asp105. Glu106 is an active-site residue.

Belongs to the DNA polymerase type-Y family. In terms of assembly, monomer. Mg(2+) is required as a cofactor.

It is found in the cytoplasm. It carries out the reaction DNA(n) + a 2'-deoxyribonucleoside 5'-triphosphate = DNA(n+1) + diphosphate. In terms of biological role, poorly processive, error-prone DNA polymerase involved in untargeted mutagenesis. Copies undamaged DNA at stalled replication forks, which arise in vivo from mismatched or misaligned primer ends. These misaligned primers can be extended by PolIV. Exhibits no 3'-5' exonuclease (proofreading) activity. May be involved in translesional synthesis, in conjunction with the beta clamp from PolIII. This Protochlamydia amoebophila (strain UWE25) protein is DNA polymerase IV.